A 597-amino-acid polypeptide reads, in one-letter code: Chaperonin 60 subunit beta 3, chloroplastic (597 aa).

Residues 1–20 (MASTFSATSSMGSSLAPPSN) are disordered. The N-terminal 29 residues, 1-29 (MASTFSATSSMGSSLAPPSNRLSSFVSIS), are a transit peptide targeting the chloroplast. Phosphoserine occurs at positions 97 and 474. The stretch at 387–489 (STEEVVKKRV…KETLANDEEK (103 aa)) forms a coiled coil.

Belongs to the chaperonin (HSP60) family. As to quaternary structure, part of the Cpn60 complex composed of 7 alpha and 7 beta subunits. Can also form a complex composed of 14 beta subunits only. Both complexes show ATPase activity. The Cpn60 complex interacts with the Cpn10 complex.

The protein resides in the plastid. The protein localises to the chloroplast. In terms of biological role, involved in protein assisted folding. The chain is Chaperonin 60 subunit beta 3, chloroplastic (CPN60B3) from Arabidopsis thaliana (Mouse-ear cress).